A 210-amino-acid chain; its full sequence is ATP-dependent dethiobiotin synthetase BioD (210 aa).

Residue 12-17 (NVGKTH) coordinates ATP. Thr16 is a binding site for Mg(2+). Residue Lys37 is part of the active site. Thr41 serves as a coordination point for substrate. Position 114 (Glu114) interacts with Mg(2+). 114–117 (EGAG) contributes to the ATP binding site.

It belongs to the dethiobiotin synthetase family. As to quaternary structure, homodimer. Mg(2+) serves as cofactor.

It localises to the cytoplasm. The catalysed reaction is (7R,8S)-7,8-diammoniononanoate + CO2 + ATP = (4R,5S)-dethiobiotin + ADP + phosphate + 3 H(+). Its pathway is cofactor biosynthesis; biotin biosynthesis; biotin from 7,8-diaminononanoate: step 1/2. In terms of biological role, catalyzes a mechanistically unusual reaction, the ATP-dependent insertion of CO2 between the N7 and N8 nitrogen atoms of 7,8-diaminopelargonic acid (DAPA, also called 7,8-diammoniononanoate) to form a ureido ring. The polypeptide is ATP-dependent dethiobiotin synthetase BioD (Sulfurovum sp. (strain NBC37-1)).